A 472-amino-acid chain; its full sequence is Velvet complex subunit umv2 (472 aa).

4 stretches are compositionally biased toward basic and acidic residues: residues 1–10 (MSRSDTDGRD), 29–59 (SQRR…DSHG), 67–80 (YSRD…HRGD), and 89–105 (SYQR…EQER). Disordered regions lie at residues 1 to 121 (MSRS…PLEA), 281 to 327 (CDDG…QFGG), and 433 to 472 (SQGI…EDDE). The segment covering 106-116 (SYGGASASRSS) has biased composition (low complexity). The Velvet domain maps to 158–441 (ENGRRYRLVV…ASQGIKIPVR (284 aa)). A compositionally biased stretch (polar residues) spans 286 to 298 (RSSTHPQHASEST). The segment covering 456 to 466 (DGMGDYDGASG) has biased composition (gly residues).

Belongs to the velvet family. VelB subfamily. In terms of assembly, component of the heterotrimeric velvet complex composed of laeA, veA and velB; VeA acting as a bridging protein between laeA and velB. Forms a heterodimeric complex with vosA; the formation of the velB-vosA complex is light-dependent.

It is found in the nucleus. The protein resides in the cytoplasm. Component of the velvet transcription factor complex that controls sexual/asexual developmental ratio in response to light, promoting sexual development in the darkness while stimulating asexual sporulation under illumination. The velvet complex acts as a global regulator for secondary metabolite gene expression. Component of the velB-VosA heterodimeric complex that plays a dual role in activating genes associated with spore maturation and repressing certain development-associated genes. The velB-VosA complex binds DNA through the DNA-binding domain of vosA that recognizes an 11-nucleotide consensus sequence 5'-CTGGCCGCGGC-3' consisting of two motifs in the promoters of key developmental regulatory genes. Required for full virulence on seedlings. The polypeptide is Velvet complex subunit umv2 (Mycosarcoma maydis (Corn smut fungus)).